A 278-amino-acid polypeptide reads, in one-letter code: Large ribosomal subunit protein uL2 (278 aa).

2 disordered regions span residues M1 to H58 and V225 to R278. A compositionally biased stretch (basic residues) spans L37–H58. The segment covering P253–I267 has biased composition (basic and acidic residues). The segment covering V268 to R278 has biased composition (basic residues).

It belongs to the universal ribosomal protein uL2 family. In terms of assembly, part of the 50S ribosomal subunit. Forms a bridge to the 30S subunit in the 70S ribosome.

One of the primary rRNA binding proteins. Required for association of the 30S and 50S subunits to form the 70S ribosome, for tRNA binding and peptide bond formation. It has been suggested to have peptidyltransferase activity; this is somewhat controversial. Makes several contacts with the 16S rRNA in the 70S ribosome. This is Large ribosomal subunit protein uL2 from Rhodococcus erythropolis (strain PR4 / NBRC 100887).